Reading from the N-terminus, the 341-residue chain is Solute carrier family 25 member 43 (341 aa).

Solcar repeat units follow at residues 11 to 101, 105 to 185, and 200 to 298; these read TGGQ…TDDL, SQWS…LLVY, and SLPQ…LYQN. The next 6 membrane-spanning stretches (helical) occupy residues 16–36, 68–88, 110–130, 166–186, 205–225, and 262–282; these read LLCA…LELA, LWKG…VQLA, IMAG…TDLI, GVSL…LVYM, FANV…FETV, and VLGL…YFGI.

The protein belongs to the mitochondrial carrier (TC 2.A.29) family.

The protein localises to the mitochondrion inner membrane. The sequence is that of Solute carrier family 25 member 43 (SLC25A43) from Homo sapiens (Human).